Here is a 548-residue protein sequence, read N- to C-terminus: Membrane protein insertase YidC (548 aa).

5 helical membrane-spanning segments follow: residues 6 to 26 (NLILIGLLFVSFLLWQQWESD), 349 to 369 (TVFQGFVHNWGVAIIMLTLLV), 424 to 444 (LGGCLPILVQMPIFIALYWAL), 455 to 475 (FALWITDLSVKDPFFVLPILM), and 503 to 523 (PIIFTFMFLWFPAGLTLYWLV).

Belongs to the OXA1/ALB3/YidC family. Type 1 subfamily. Interacts with the Sec translocase complex via SecD. Specifically interacts with transmembrane segments of nascent integral membrane proteins during membrane integration.

It localises to the cell inner membrane. Required for the insertion and/or proper folding and/or complex formation of integral membrane proteins into the membrane. Involved in integration of membrane proteins that insert both dependently and independently of the Sec translocase complex, as well as at least some lipoproteins. Aids folding of multispanning membrane proteins. The polypeptide is Membrane protein insertase YidC (Aeromonas salmonicida (strain A449)).